Here is a 297-residue protein sequence, read N- to C-terminus: Protoheme IX farnesyltransferase (297 aa).

9 consecutive transmembrane segments (helical) span residues 12-32, 36-56, 85-105, 108-128, 133-153, 163-183, 209-229, 230-250, and 266-286; these read PGII…AAKG, YALF…GCVF, VSLV…YLAA, LAMW…SLYM, VYGT…GYCA, LILL…IAIF, ITLY…SGYA, GYKY…MALQ, and FIFS…DFMV.

It belongs to the UbiA prenyltransferase family. Protoheme IX farnesyltransferase subfamily.

Its subcellular location is the cell inner membrane. The catalysed reaction is heme b + (2E,6E)-farnesyl diphosphate + H2O = Fe(II)-heme o + diphosphate. It participates in porphyrin-containing compound metabolism; heme O biosynthesis; heme O from protoheme: step 1/1. Its function is as follows. Converts heme B (protoheme IX) to heme O by substitution of the vinyl group on carbon 2 of heme B porphyrin ring with a hydroxyethyl farnesyl side group. The protein is Protoheme IX farnesyltransferase of Sodalis glossinidius (strain morsitans).